The chain runs to 391 residues: Coproporphyrin III ferrochelatase (391 aa).

Residues Ser79 and Tyr148 each contribute to the Fe-coproporphyrin III site. Residues His211 and Glu305 each coordinate Fe(2+).

This sequence belongs to the ferrochelatase family.

It is found in the cytoplasm. The enzyme catalyses Fe-coproporphyrin III + 2 H(+) = coproporphyrin III + Fe(2+). The protein operates within porphyrin-containing compound metabolism; protoheme biosynthesis. Functionally, involved in coproporphyrin-dependent heme b biosynthesis. Catalyzes the insertion of ferrous iron into coproporphyrin III to form Fe-coproporphyrin III. This is Coproporphyrin III ferrochelatase from Tropheryma whipplei (strain TW08/27) (Whipple's bacillus).